The chain runs to 189 residues: Nucleoside triphosphate pyrophosphatase (189 aa).

Asp-70 functions as the Proton acceptor in the catalytic mechanism.

The protein belongs to the Maf family. It depends on a divalent metal cation as a cofactor.

The protein localises to the cytoplasm. The catalysed reaction is a ribonucleoside 5'-triphosphate + H2O = a ribonucleoside 5'-phosphate + diphosphate + H(+). It carries out the reaction a 2'-deoxyribonucleoside 5'-triphosphate + H2O = a 2'-deoxyribonucleoside 5'-phosphate + diphosphate + H(+). Its function is as follows. Nucleoside triphosphate pyrophosphatase. May have a dual role in cell division arrest and in preventing the incorporation of modified nucleotides into cellular nucleic acids. The chain is Nucleoside triphosphate pyrophosphatase from Xylella fastidiosa (strain 9a5c).